The following is a 553-amino-acid chain: L-aspartate oxidase (553 aa).

Residues 13 to 16, Lys35, 42 to 49, and Asp208 contribute to the FAD site; these read SGAA and ASDWAQGG. Arg275 acts as the Proton donor/acceptor in catalysis. FAD contacts are provided by residues Glu364 and 380-381; that span reads SL.

Belongs to the FAD-dependent oxidoreductase 2 family. NadB subfamily. It depends on FAD as a cofactor.

The protein resides in the cytoplasm. The catalysed reaction is L-aspartate + O2 = iminosuccinate + H2O2. It functions in the pathway cofactor biosynthesis; NAD(+) biosynthesis; iminoaspartate from L-aspartate (oxidase route): step 1/1. In terms of biological role, catalyzes the oxidation of L-aspartate to iminoaspartate, the first step in the de novo biosynthesis of NAD(+). In Synechocystis sp. (strain ATCC 27184 / PCC 6803 / Kazusa), this protein is L-aspartate oxidase (nadB).